The chain runs to 583 residues: 2-succinyl-5-enolpyruvyl-6-hydroxy-3-cyclohexene-1-carboxylate synthase (583 aa).

This sequence belongs to the TPP enzyme family. MenD subfamily. As to quaternary structure, homodimer. Mg(2+) serves as cofactor. Mn(2+) is required as a cofactor. Requires thiamine diphosphate as cofactor.

The catalysed reaction is isochorismate + 2-oxoglutarate + H(+) = 5-enolpyruvoyl-6-hydroxy-2-succinyl-cyclohex-3-ene-1-carboxylate + CO2. It functions in the pathway quinol/quinone metabolism; 1,4-dihydroxy-2-naphthoate biosynthesis; 1,4-dihydroxy-2-naphthoate from chorismate: step 2/7. The protein operates within quinol/quinone metabolism; menaquinone biosynthesis. Functionally, catalyzes the thiamine diphosphate-dependent decarboxylation of 2-oxoglutarate and the subsequent addition of the resulting succinic semialdehyde-thiamine pyrophosphate anion to isochorismate to yield 2-succinyl-5-enolpyruvyl-6-hydroxy-3-cyclohexene-1-carboxylate (SEPHCHC). In Roseiflexus sp. (strain RS-1), this protein is 2-succinyl-5-enolpyruvyl-6-hydroxy-3-cyclohexene-1-carboxylate synthase.